We begin with the raw amino-acid sequence, 207 residues long: dTTP/UTP pyrophosphatase (207 aa).

Asp79 acts as the Proton acceptor in catalysis.

It belongs to the Maf family. YhdE subfamily. A divalent metal cation is required as a cofactor.

Its subcellular location is the cytoplasm. The enzyme catalyses dTTP + H2O = dTMP + diphosphate + H(+). It catalyses the reaction UTP + H2O = UMP + diphosphate + H(+). Its function is as follows. Nucleoside triphosphate pyrophosphatase that hydrolyzes dTTP and UTP. May have a dual role in cell division arrest and in preventing the incorporation of modified nucleotides into cellular nucleic acids. The sequence is that of dTTP/UTP pyrophosphatase from Rhodopseudomonas palustris (strain HaA2).